Here is a 412-residue protein sequence, read N- to C-terminus: Double C2-like domain-containing protein beta (412 aa).

Residues Met1–Tyr36 form a negatively regulates targeting to plasma membrane region. The mediates interaction with DYNLT1 stretch occupies residues Met1–Tyr90. Residues Pro38–Asp123 form a disordered region. Low complexity predominate over residues Ala49–Ser73. A compositionally biased stretch (pro residues) spans Gly95–Lys108. The segment covering Asp112–Asp123 has biased composition (acidic residues). 2 C2 domains span residues Ala126–Leu250 and Glu266–His399. The Ca(2+) site is built by Asp157, Asp163, Asp218, Asp220, Asp297, Asp303, Asp357, Asp359, and Asp365. Residues Asp257–Asn375 are mediates interaction with STXBP3. Residue Ser411 is modified to Phosphoserine.

As to quaternary structure, interacts with STX4; the interaction is calcium-dependent, increased by insulin and glucose, and mediates vesicle fusion with plasma membrane in pancreatic cells and adipocytes. Interacts with STXBP3; the interaction is direct, occurs at the cell membrane and regulates glucose-stimulated insulin secretion. Interacts with cytoplasmic dynein light chain DYNLT1. Interacts with the SNARE (soluble N-ethylmaleimide-sensitive factor attached protein receptor) complex composed of SNAP25, STX1A and VAMP2; the interaction is calcium-dependent and competitive with SYT1. May interact with UNC13A; the interaction mediates targeting to the plasma membrane. Requires Ca(2+) as cofactor. Expressed in brain; highly enriched in neurons.

The protein localises to the cytoplasm. Its subcellular location is the cytoplasmic granule. It localises to the cell membrane. Calcium sensor which positively regulates SNARE-dependent fusion of vesicles with membranes. Binds phospholipids in a calcium-dependent manner and may act at the priming stage of fusion by modifying membrane curvature to stimulate fusion. Involved in calcium-triggered exocytosis in chromaffin cells and calcium-dependent spontaneous release of neurotransmitter in absence of action potentials in neuronal cells. Involved both in glucose-stimulated insulin secretion in pancreatic cells and insulin-dependent GLUT4 transport to the plasma membrane in adipocytes. In Rattus norvegicus (Rat), this protein is Double C2-like domain-containing protein beta (Doc2b).